A 507-amino-acid chain; its full sequence is UDP-N-acetylhexosamine pyrophosphorylase-like protein 1 (507 aa).

Residues 56–91 (ACARPHGPPPDLAARLRPLPPERVGRASRSDPETRR) are disordered. Over residues 78 to 91 (RVGRASRSDPETRR) the composition is skewed to basic and acidic residues. The short motif at 111–114 (LAGG) is the Substrate binding element. Residues 111–114 (LAGG), K125, Q199, and G225 contribute to the UTP site. Position 226 (N226) interacts with substrate. D256 is a UTP binding site. The short motif at 306-307 (EY) is the Substrate binding element. K380 serves as a coordination point for UTP. Substrate is bound at residue K410.

It belongs to the UDPGP type 1 family.

This Homo sapiens (Human) protein is UDP-N-acetylhexosamine pyrophosphorylase-like protein 1 (UAP1L1).